The chain runs to 901 residues: MAANFKEQSKKHFDLNGQSYTYYDLKAVEEQGITKVSKLPYSIRVLLESLLRQEDDFVITDDHIKALSQFGKDGNEGEVPFKPSRVILQDFTGVPAVVDLASLRKAMDDVGGDITKINPEVPVDLVIDHSVQVDSYANPEALERNMKLEFERNYERYQFLNWATKAFDNYNAVPPATGIVHQVNLEYLASVVHVRDVDGEKTAFPDTLVGTDSHTTMINGIGVLGWGVGGIEAEAGMLGQPSYFPIPEVIGVRLVNSLPQGATATDLALRVTQELRKKGVVGKFVEFFGPGVQHLPLADRATIANMAPEYGATCGFFPVDDESLKYMKLTGRSDEHIALVKEYLKQNHMFFDVEKEDPNYTDVIELDLSTVEASLSGPKRPQDLIFLSDMKSSFENSVTAPAGNQGHGLDKSEFDKKAEINFKDGSKATMKTGDIAIAAITSCTNTSNPYVMLGAGLVAKKAVEKGLKVPEYVKTSLAPGSKVVTGYLRGAGLQPYLDDLGFNLVGYGCTTCIGNSGPLLPEIEKAIADEDLLVTSVLSGNRNFEGRIHPLVKANYLASPQLVVAYALAGSVDIDLQNEPIGKGNDGEDVYLKDIWPSIKEVSDTVDSVVTPELFIEEYNNVYNNNELWNEIDVTDQPLYDFDPNSTYIQNPSFFQGLSKEPGTIVPLNGLRVMGKFGDSVTTDHISPAGAIGKDTPAGKYLQDHQVPIREFNSYGSRRGNHEVMVRGTFANIRIKNQLAPGTEGGFTTYWPTNEVMPIFDAAMKYKEDGTGLVVLAGNDYGMGSSRDWAAKGTNLLGVKTVIAQSYERIHRSNLVMMGVLPLEFKKGESADSLGLDGTEEISVNIDENVQPHDYVKVTAKKQDGDLVEFDAMVRFDSLVEMDYYRHGGILQMVLRNKLAQ.

Cys443, Cys509, and Cys512 together coordinate [4Fe-4S] cluster.

The protein belongs to the aconitase/IPM isomerase family. In terms of assembly, monomer. The cofactor is [4Fe-4S] cluster.

It catalyses the reaction citrate = D-threo-isocitrate. The catalysed reaction is (2S,3R)-3-hydroxybutane-1,2,3-tricarboxylate = 2-methyl-cis-aconitate + H2O. Its pathway is carbohydrate metabolism; tricarboxylic acid cycle; isocitrate from oxaloacetate: step 2/2. It participates in organic acid metabolism; propanoate degradation. In terms of biological role, involved in the catabolism of short chain fatty acids (SCFA) via the tricarboxylic acid (TCA)(acetyl degradation route) and probably the 2-methylcitrate cycle I (propionate degradation route). Catalyzes the reversible isomerization of citrate to isocitrate via cis-aconitate. Could catalyze the hydration of 2-methyl-cis-aconitate to yield (2R,3S)-2-methylisocitrate. The apo form of AcnA functions as a RNA-binding regulatory protein. The sequence is that of Aconitate hydratase A (acnA) from Staphylococcus aureus (strain MRSA252).